Consider the following 64-residue polypeptide: Large ribosomal subunit protein bL35c (64 aa).

The protein belongs to the bacterial ribosomal protein bL35 family.

The protein resides in the plastid. Its subcellular location is the chloroplast. This Cyanidium caldarium (Red alga) protein is Large ribosomal subunit protein bL35c.